The chain runs to 278 residues: MSIDGLPPLREVIERHDLMPKKSLGQNFLFDLNLTSKIARQAGNLQDQPVIEVGPGPGGLTRALLAQGAYVTAIERDERCLDALAEIEAHYPGRLRIISGDALEQDFSALFPDGPKPRIVANLPYNVGTQLLLNWLLVEPWPPFYSSMTLMFQREVAERIVATPDSDHYGRLGVLAGWRTVSKISFDVPPQAFTPPPKVMSSVVHIIPRENPLPCNANALGQITQAAFGQRRKMLRQSLKPVGGAELLEKTGIDGTRRAETLSVEEFVALANAYRPIK.

The S-adenosyl-L-methionine site is built by asparagine 27, leucine 29, glycine 54, glutamate 75, aspartate 101, and asparagine 122.

It belongs to the class I-like SAM-binding methyltransferase superfamily. rRNA adenine N(6)-methyltransferase family. RsmA subfamily.

It localises to the cytoplasm. The catalysed reaction is adenosine(1518)/adenosine(1519) in 16S rRNA + 4 S-adenosyl-L-methionine = N(6)-dimethyladenosine(1518)/N(6)-dimethyladenosine(1519) in 16S rRNA + 4 S-adenosyl-L-homocysteine + 4 H(+). Its function is as follows. Specifically dimethylates two adjacent adenosines (A1518 and A1519) in the loop of a conserved hairpin near the 3'-end of 16S rRNA in the 30S particle. May play a critical role in biogenesis of 30S subunits. This chain is Ribosomal RNA small subunit methyltransferase A, found in Brucella anthropi (strain ATCC 49188 / DSM 6882 / CCUG 24695 / JCM 21032 / LMG 3331 / NBRC 15819 / NCTC 12168 / Alc 37) (Ochrobactrum anthropi).